We begin with the raw amino-acid sequence, 257 residues long: 3-deoxy-manno-octulosonate cytidylyltransferase (257 aa).

Belongs to the KdsB family.

The protein localises to the cytoplasm. It carries out the reaction 3-deoxy-alpha-D-manno-oct-2-ulosonate + CTP = CMP-3-deoxy-beta-D-manno-octulosonate + diphosphate. Its pathway is nucleotide-sugar biosynthesis; CMP-3-deoxy-D-manno-octulosonate biosynthesis; CMP-3-deoxy-D-manno-octulosonate from 3-deoxy-D-manno-octulosonate and CTP: step 1/1. It functions in the pathway bacterial outer membrane biogenesis; lipopolysaccharide biosynthesis. Its function is as follows. Activates KDO (a required 8-carbon sugar) for incorporation into bacterial lipopolysaccharide in Gram-negative bacteria. This is 3-deoxy-manno-octulosonate cytidylyltransferase from Chromohalobacter salexigens (strain ATCC BAA-138 / DSM 3043 / CIP 106854 / NCIMB 13768 / 1H11).